The following is a 114-amino-acid chain: Small ribosomal subunit protein bS16 (114 aa).

The tract at residues 87–114 is disordered; that stretch reads AFREQPVQSAPKKKAQERAAERAKAAEA. Basic and acidic residues predominate over residues 100–114; sequence KAQERAAERAKAAEA.

It belongs to the bacterial ribosomal protein bS16 family.

This is Small ribosomal subunit protein bS16 from Acidiphilium cryptum (strain JF-5).